A 1102-amino-acid chain; its full sequence is Coiled-coil domain-containing protein AGAP005037 (1102 aa).

Residues 1–11 (MLIRWKSKDKS) show a composition bias toward basic and acidic residues. 2 disordered regions span residues 1-69 (MLIR…HTLG) and 295-318 (HKSK…RGMY). The span at 12 to 21 (SSSTSSSSST) shows a compositional bias: low complexity. Residues 50–65 (IDDRRRSARSREDPRR) show a composition bias toward basic and acidic residues. Residues 405–430 (HRIRVEHMERQLANLTGLVQKALTQN) are a coiled coil. Disordered regions lie at residues 450–475 (RNAE…STCH) and 489–539 (DIQG…PLVM). Coiled-coil stretches lie at residues 554-579 (EVYN…LRRL) and 614-654 (DKER…EVIN). 3 disordered regions span residues 745-774 (LPIP…PSPR), 832-958 (TKIS…CSDN), and 1031-1087 (LCGG…TLPP). Polar residues predominate over residues 832–849 (TKISQSQLYPSEPVSSNV). A compositionally biased stretch (pro residues) spans 867 to 881 (PPQPTRPTTGKPPVP). A compositionally biased stretch (low complexity) spans 904 to 918 (TSSRSPLASPTSPHV). Over residues 936-958 (DCEQQQRTSEGTDSGSESVCSDN) the composition is skewed to polar residues.

This chain is Coiled-coil domain-containing protein AGAP005037, found in Anopheles gambiae (African malaria mosquito).